Here is a 267-residue protein sequence, read N- to C-terminus: MYLELVKKNSVILDKDGNKVKEVELPFIFSFPVRKDIIRRVFLAEFTHSLQPKGRDPMAGKRTSAESFGINLGMARVPRVKNSGEAALAPNTVGGRLTFPPSVDKKLVEEANDKEKQLAVISALSATADKVFVKARGHVFKDSVSFPIVVTDDIVSLKTASEVEEFLEKIGVYDDVKRVKERIRIRAGKGKMRGRKYKESIGPLIIVHDSNSPIVKAARNIAGVDVVNAKDVSVIHLAPGTHSGRLTIYTETSIKILDERLSKRLVS.

This sequence belongs to the universal ribosomal protein uL4 family. In terms of assembly, part of the 50S ribosomal subunit.

One of the primary rRNA binding proteins, this protein initially binds near the 5'-end of the 23S rRNA. It is important during the early stages of 50S assembly. It makes multiple contacts with different domains of the 23S rRNA in the assembled 50S subunit and ribosome. Functionally, forms part of the polypeptide exit tunnel. In Saccharolobus islandicus (strain L.S.2.15 / Lassen #1) (Sulfolobus islandicus), this protein is Large ribosomal subunit protein uL4.